The chain runs to 430 residues: Enolase (430 aa).

Glutamine 163 contributes to the (2R)-2-phosphoglycerate binding site. The active-site Proton donor is glutamate 205. Positions 242, 288, and 315 each coordinate Mg(2+). Residues lysine 340, arginine 369, serine 370, and lysine 391 each contribute to the (2R)-2-phosphoglycerate site. Lysine 340 functions as the Proton acceptor in the catalytic mechanism.

The protein belongs to the enolase family. The cofactor is Mg(2+).

It is found in the cytoplasm. The protein resides in the secreted. The protein localises to the cell surface. It catalyses the reaction (2R)-2-phosphoglycerate = phosphoenolpyruvate + H2O. The protein operates within carbohydrate degradation; glycolysis; pyruvate from D-glyceraldehyde 3-phosphate: step 4/5. Functionally, catalyzes the reversible conversion of 2-phosphoglycerate (2-PG) into phosphoenolpyruvate (PEP). It is essential for the degradation of carbohydrates via glycolysis. The sequence is that of Enolase from Acidobacterium capsulatum (strain ATCC 51196 / DSM 11244 / BCRC 80197 / JCM 7670 / NBRC 15755 / NCIMB 13165 / 161).